The sequence spans 222 residues: N-acetyltransferase 8B (222 aa).

Residues 1-42 are Cytoplasmic-facing; sequence MVSYHICEYQDSDYKSVVDVFTKGAEEYIPSTFRHLLLLPRT. Residues 43-67 form a helical; Signal-anchor for type II membrane protein membrane-spanning segment; the sequence is LLLLLGVSLALVLVSGSWLLAVVCI. The region spanning 62–217 is the N-acetyltransferase domain; that stretch reads LAVVCIFFLL…VGIRFVQLNY (156 aa). At 68-222 the chain is on the lumenal side; that stretch reads FFLLPFLWFL…VQLNYSFPSA (155 aa). At lysine 99 the chain carries N6-acetyllysine.

This sequence belongs to the NAT8 family. Acetylation on Lys-99 modulates enzymatic activity.

It localises to the endoplasmic reticulum-Golgi intermediate compartment membrane. It is found in the endoplasmic reticulum membrane. The catalysed reaction is L-lysyl-[protein] + acetyl-CoA = N(6)-acetyl-L-lysyl-[protein] + CoA + H(+). In terms of biological role, endoplasmic reticulum (ER)-membrane-bound lysine N-acetyltransferase catalyzing the N6-acetylation of lysine residues in the lumen of the ER in various proteins, including PROM1 and BACE1, using acetyl-CoA as acetyl donor. Thereby, may regulate apoptosis through the acetylation and the regulation of the expression of PROM1. Acetylates and stabilizes BACE1 immature protein, leading to increased steady-state levels in neurons. By acting on BACE1 expression, may regulate amyloid beta-peptide formation. N(6)-lysine acetylation in ER maintains protein homeostasis and regulates reticulophagy. The sequence is that of N-acetyltransferase 8B from Rattus norvegicus (Rat).